Here is a 229-residue protein sequence, read N- to C-terminus: Peroxiredoxin 1 (229 aa).

Residues 33–192 (LGPKNKAPDF…AFRTLKAFQF (160 aa)) enclose the Thioredoxin domain. Cys78 acts as the Cysteine sulfenic acid (-SOH) intermediate in catalysis.

Belongs to the peroxiredoxin family. AhpC/Prx1 subfamily. As to quaternary structure, homodimer; disulfide-linked, upon oxidation.

The enzyme catalyses a hydroperoxide + [thioredoxin]-dithiol = an alcohol + [thioredoxin]-disulfide + H2O. Its function is as follows. Thiol-specific peroxidase that catalyzes the reduction of hydrogen peroxide and organic hydroperoxides to water and alcohols, respectively. Plays a role in cell protection against oxidative stress by detoxifying peroxides and as sensor of hydrogen peroxide-mediated signaling events. This chain is Peroxiredoxin 1 (TSA1), found in Brugia malayi (Filarial nematode worm).